The chain runs to 441 residues: Keratin, type I cytoskeletal 15 (441 aa).

Residues 2–91 are head; that stretch reads LLLGHASTST…GGSDLLLGTS (90 aa). A coil 1A region spans residues 92–127; it reads GKEAMQNLNDRLASYLDKVRSLEGKNHELELKIKDW. Residues 92 to 407 enclose the IF rod domain; that stretch reads GKEAMQNLND…MLLDSEDSKG (316 aa). A linker 1 region spans residues 128 to 149; it reads YSQVIPGTGGPDARDYGHLEKE. A coil 1B region spans residues 150–241; the sequence is IEDLQNKVNN…KNHEEDMKAA (92 aa). A linker 12 region spans residues 242-261; it reads SSGIAGQVNVELDAAPGTNL. Residues 262–403 are coil 2; that stretch reads LDELDACRRD…ATYRMLLDSE (142 aa). The interval 404–441 is tail; sequence DSKGSIINHKILTAIEKLVDGIVLSTEVLEKQIPVLSY.

Belongs to the intermediate filament family. In terms of assembly, heterotetramer of two type I and two type II keratins. Expressed in skin.

This is Keratin, type I cytoskeletal 15 (KRT15) from Protopterus aethiopicus (Marbled lungfish).